A 279-amino-acid chain; its full sequence is CDP-paratose synthase (279 aa).

Tyrosine 115 functions as the Proton acceptor in the catalytic mechanism.

It belongs to the NAD(P)-dependent epimerase/dehydratase family.

It catalyses the reaction CDP-alpha-D-paratose + NADP(+) = CDP-4-dehydro-3,6-dideoxy-alpha-D-glucose + NADPH + H(+). It functions in the pathway nucleotide-sugar biosynthesis; CDP-3,6-dideoxy-D-mannose biosynthesis; CDP-3,6-dideoxy-D-mannose from CTP and alpha-D-glucose 1-phosphate: step 4/5. Functionally, catalyzes synthesis of paratose and tyvelose, unusual 3,6-dideoxyhexose sugars that form part of the O-antigen in the lipopolysaccharides of several enteric bacteria. The protein is CDP-paratose synthase (rfbS) of Salmonella typhi.